The primary structure comprises 619 residues: Polyadenylate-binding protein 1-like (619 aa).

RRM domains lie at 11-89 (ASLY…WSQR), 99-175 (GNIF…HFKS), 191-268 (TNIY…RAQK), and 294-370 (VNLY…LAQR). A disordered region spans residues 431 to 458 (PAPRWTSQPPRPSSAYPPGASMVRPPVV). The PABC domain occupies 533-610 (QEPLTASMLA…AVAVLQAHQA (78 aa)).

Belongs to the polyadenylate-binding protein type-1 family. As to expression, expressed in ovary and testis. Also expressed in pancreas, liver and thymus, and at lower levels in other somatic tissues including brain and lung.

It localises to the cytoplasm. Its function is as follows. Poly(A)-binding protein involved in oocyte maturation and early embryo development. It is required for cytosolic mRNA polyadenylation and translational activation of maternally stored mRNA in oocytes. This Homo sapiens (Human) protein is Polyadenylate-binding protein 1-like.